Reading from the N-terminus, the 699-residue chain is Elongation factor G 1 (699 aa).

The tr-type G domain occupies 8-290 (ERYRNIGICA…AVIEYLPSPT (283 aa)). GTP-binding positions include 17-24 (AHVDAGKT), 88-92 (DTPGH), and 142-145 (NKMD).

The protein belongs to the TRAFAC class translation factor GTPase superfamily. Classic translation factor GTPase family. EF-G/EF-2 subfamily.

Its subcellular location is the cytoplasm. Its function is as follows. Catalyzes the GTP-dependent ribosomal translocation step during translation elongation. During this step, the ribosome changes from the pre-translocational (PRE) to the post-translocational (POST) state as the newly formed A-site-bound peptidyl-tRNA and P-site-bound deacylated tRNA move to the P and E sites, respectively. Catalyzes the coordinated movement of the two tRNA molecules, the mRNA and conformational changes in the ribosome. The protein is Elongation factor G 1 of Hahella chejuensis (strain KCTC 2396).